The chain runs to 74 residues: Small ribosomal subunit protein bS18 (74 aa).

Belongs to the bacterial ribosomal protein bS18 family. As to quaternary structure, part of the 30S ribosomal subunit. Forms a tight heterodimer with protein bS6.

Its function is as follows. Binds as a heterodimer with protein bS6 to the central domain of the 16S rRNA, where it helps stabilize the platform of the 30S subunit. In Rhizorhabdus wittichii (strain DSM 6014 / CCUG 31198 / JCM 15750 / NBRC 105917 / EY 4224 / RW1) (Sphingomonas wittichii), this protein is Small ribosomal subunit protein bS18.